The sequence spans 80 residues: Centromere protein X (80 aa).

Belongs to the CENP-X/MHF2 family. In terms of assembly, heterodimer with CENPX, sometimes called MHF; this interaction stabilizes both partners. MHF heterodimers can assemble to form tetrameric structures. MHF also coassemble with CENPT-CENPW heterodimers at centromeres to form the tetrameric CENP-T-W-S-X complex. Forms a discrete complex with FANCM and CENPX, called FANCM-MHF; this interaction, probably mediated by direct binding between CENPS and FANCM, leads to synergistic activation of double-stranded DNA binding and strongly stimulates FANCM-mediated DNA remodeling. Recruited by FANCM to the Fanconi anemia (FA) core complex, which consists of CENPS, CENPX, FANCA, FANCB, FANCC, FANCE, FANCF, FANCG, FANCL, FANCM, FAAP24 and FAAP100. The FA core complex associates with Bloom syndrome (BLM) complex, which consists of at least BLM, DNA topoisomerase 3-alpha (TOP3A), RMI1/BLAP75, RPA1/RPA70 and RPA2/RPA32. The super complex between FA and BLM is called BRAFT.

Its subcellular location is the nucleus. It is found in the chromosome. It localises to the centromere. The protein localises to the kinetochore. In terms of biological role, DNA-binding component of the Fanconi anemia (FA) core complex. Required for the normal activation of the FA pathway, leading to monoubiquitination of the FANCI-FANCD2 complex in response to DNA damage, cellular resistance to DNA cross-linking drugs, and prevention of chromosomal breakage. In complex with CENPS (MHF heterodimer), crucial cofactor for FANCM in both binding and ATP-dependent remodeling of DNA. Stabilizes FANCM. In complex with CENPS and FANCM (but not other FANC proteins), rapidly recruited to blocked forks and promotes gene conversion at blocked replication forks. In complex with CENPS, CENPT and CENPW (CENP-T-W-S-X heterotetramer), involved in the formation of a functional kinetochore outer plate, which is essential for kinetochore-microtubule attachment and faithful mitotic progression. As a component of MHF and CENP-T-W-S-X complexes, binds DNA and bends it to form a nucleosome-like structure. DNA-binding function is fulfilled in the presence of CENPS, with the following preference for DNA substates: Holliday junction &gt; double-stranded &gt; splay arm &gt; single-stranded. Does not bind DNA on its own. The chain is Centromere protein X (CENPX) from Gallus gallus (Chicken).